The sequence spans 275 residues: 2,3,4,5-tetrahydropyridine-2,6-dicarboxylate N-succinyltransferase (275 aa).

Residues R106 and D143 each coordinate substrate.

The protein belongs to the transferase hexapeptide repeat family. As to quaternary structure, homotrimer.

It localises to the cytoplasm. It catalyses the reaction (S)-2,3,4,5-tetrahydrodipicolinate + succinyl-CoA + H2O = (S)-2-succinylamino-6-oxoheptanedioate + CoA. It functions in the pathway amino-acid biosynthesis; L-lysine biosynthesis via DAP pathway; LL-2,6-diaminopimelate from (S)-tetrahydrodipicolinate (succinylase route): step 1/3. The polypeptide is 2,3,4,5-tetrahydropyridine-2,6-dicarboxylate N-succinyltransferase (Paraburkholderia xenovorans (strain LB400)).